Consider the following 388-residue polypeptide: Probable protein phosphatase 2C 43 (388 aa).

A PPM-type phosphatase domain is found at 53–352; that stretch reads EFSFAVVQAN…DDITVVVVFI (300 aa). Positions 84, 85, 284, and 343 each coordinate Mn(2+).

It belongs to the PP2C family. The cofactor is Mg(2+). Mn(2+) serves as cofactor.

It catalyses the reaction O-phospho-L-seryl-[protein] + H2O = L-seryl-[protein] + phosphate. It carries out the reaction O-phospho-L-threonyl-[protein] + H2O = L-threonyl-[protein] + phosphate. The protein is Probable protein phosphatase 2C 43 of Oryza sativa subsp. japonica (Rice).